The following is a 180-amino-acid chain: Ribonuclease M5 (180 aa).

In terms of domain architecture, Toprim spans 5-90 (KQIIIVEGKT…NAFIKKDDIS (86 aa)). 3 residues coordinate Mg(2+): Glu-11, Asp-59, and Asp-61.

Belongs to the ribonuclease M5 family. Mg(2+) serves as cofactor.

The protein localises to the cytoplasm. The catalysed reaction is Endonucleolytic cleavage of RNA, removing 21 and 42 nucleotides, respectively, from the 5'- and 3'-termini of a 5S-rRNA precursor.. Functionally, required for correct processing of both the 5' and 3' ends of 5S rRNA precursor. Cleaves both sides of a double-stranded region yielding mature 5S rRNA in one step. The protein is Ribonuclease M5 of Mycoplasma capricolum subsp. capricolum (strain California kid / ATCC 27343 / NCTC 10154).